The chain runs to 271 residues: Type II restriction enzyme ScrFI (271 aa).

It carries out the reaction Endonucleolytic cleavage of DNA to give specific double-stranded fragments with terminal 5'-phosphates.. A P subtype restriction enzyme that recognizes the double-stranded sequence 5'-CCNGG-3' and cleaves after C-2. The chain is Type II restriction enzyme ScrFI from Lactococcus lactis subsp. cremoris (Streptococcus cremoris).